A 382-amino-acid chain; its full sequence is Intermediate transcription factor 3 large subunit (382 aa).

Belongs to the orthopoxvirus OPG150 family. As to quaternary structure, heterodimerizes with protein A8 to form the virus intermediate transcription factor (VITF)-3.

In terms of biological role, acts with RNA polymerase to initiate transcription from intermediate gene promoters. The sequence is that of Intermediate transcription factor 3 large subunit (OPG150) from Bos taurus (Bovine).